Consider the following 140-residue polypeptide: uncharacterized protein (140 aa).

This sequence belongs to the MG067/MG068/MG395 family.

This is an uncharacterized protein from Mycoplasma pneumoniae (strain ATCC 29342 / M129 / Subtype 1) (Mycoplasmoides pneumoniae).